We begin with the raw amino-acid sequence, 314 residues long: Thymidylate synthase (314 aa).

DUMP contacts are provided by residues R32 and 176–177 (RR). C196 functions as the Nucleophile in the catalytic mechanism. Residues 216–219 (RSCD), N227, and 257–259 (HLY) each bind dUMP. Residue D219 participates in (6R)-5,10-methylene-5,6,7,8-tetrahydrofolate binding. A313 provides a ligand contact to (6R)-5,10-methylene-5,6,7,8-tetrahydrofolate.

Belongs to the thymidylate synthase family. Bacterial-type ThyA subfamily. As to quaternary structure, homodimer.

Its subcellular location is the cytoplasm. The enzyme catalyses dUMP + (6R)-5,10-methylene-5,6,7,8-tetrahydrofolate = 7,8-dihydrofolate + dTMP. The protein operates within pyrimidine metabolism; dTTP biosynthesis. Functionally, catalyzes the reductive methylation of 2'-deoxyuridine-5'-monophosphate (dUMP) to 2'-deoxythymidine-5'-monophosphate (dTMP) while utilizing 5,10-methylenetetrahydrofolate (mTHF) as the methyl donor and reductant in the reaction, yielding dihydrofolate (DHF) as a by-product. This enzymatic reaction provides an intracellular de novo source of dTMP, an essential precursor for DNA biosynthesis. The protein is Thymidylate synthase of Novosphingobium aromaticivorans (strain ATCC 700278 / DSM 12444 / CCUG 56034 / CIP 105152 / NBRC 16084 / F199).